The following is a 201-amino-acid chain: Probable nicotinate-nucleotide adenylyltransferase (201 aa).

This sequence belongs to the NadD family.

The enzyme catalyses nicotinate beta-D-ribonucleotide + ATP + H(+) = deamido-NAD(+) + diphosphate. It participates in cofactor biosynthesis; NAD(+) biosynthesis; deamido-NAD(+) from nicotinate D-ribonucleotide: step 1/1. In terms of biological role, catalyzes the reversible adenylation of nicotinate mononucleotide (NaMN) to nicotinic acid adenine dinucleotide (NaAD). The sequence is that of Probable nicotinate-nucleotide adenylyltransferase from Clostridium botulinum (strain Langeland / NCTC 10281 / Type F).